A 332-amino-acid chain; its full sequence is CAX-interacting protein 4 (332 aa).

The disordered stretch occupies residues 33-59 (GYDPYAPTSKEEPKTTQQKTEDPENSY). Residues 41–54 (SKEEPKTTQQKTED) are compositionally biased toward basic and acidic residues. The segment at 81 to 98 (GSCKKCGRVGHLTFQCRN) adopts a CCHC-type zinc-finger fold. Residues 124–133 (IRRGVGKGEV) show a composition bias toward basic and acidic residues. The interval 124–332 (IRRGVGKGEV…RKRHHRKERE (209 aa)) is disordered. A compositionally biased stretch (acidic residues) spans 134–153 (EEVSSEEEEESESSDSDVDS). Basic and acidic residues predominate over residues 154–163 (EMERIIAERF). 2 stretches are compositionally biased toward basic residues: residues 198-214 (RKRR…HKRR) and 227-236 (SKRRKERRGR). The segment covering 241–250 (DDSDESEDED) has biased composition (acidic residues). Composition is skewed to basic residues over residues 254 to 269 (VKRK…RSRR) and 314 to 332 (SSKR…KERE).

In terms of assembly, interacts with CAX1. In terms of tissue distribution, expressed in leaves, stems and roots, and at lower levels in flowers.

It is found in the nucleus. Functionally, may regulate CAX1 cation transporter. This Arabidopsis thaliana (Mouse-ear cress) protein is CAX-interacting protein 4 (CXIP4).